We begin with the raw amino-acid sequence, 603 residues long: F-box only protein 46 (603 aa).

The segment at 20–63 (YSQNQPRPPSAALKPSACPEPGGGAEPDHGPAHSENTPPALATE) is disordered. A phosphoserine; by ATM mark is found at S21 and S67. Disordered regions lie at residues 111–163 (GGSR…PASA), 235–301 (EAQR…ARAK), 326–360 (LLARADEASEGDSPAPARPEDTPPAPPPPPARDCG), and 396–440 (TVSP…AEGT). A compositionally biased stretch (low complexity) spans 152–163 (GPPAAEEGPASA). S338 carries the post-translational modification Phosphoserine. A Phosphothreonine modification is found at T347. Pro residues-rich tracts occupy residues 347-356 (TPPAPPPPPA) and 417-426 (DGPPEPPPAD). Residues 470 to 522 (RQYMLLLPEHVLVKIFSFLPTRALAALKCTCHHFKGIIEAFGVRATDSRWSRD) enclose the F-box domain.

Part of a SCF (SKP1-cullin-F-box) protein ligase complex SCF(FBXO46) composed of CUL1, SKP1, RBX1 and FBXO46. In terms of processing, phosphorylated by ATM in response to DNA damage, promoting ubiquitination and degradation by the SCF(FBXO31) complex. ATM-phosphorylated FBXO46 is ubiquitinated and degradaded by the SCF(FBXO31) complex in response to DNA damage.

The protein operates within protein modification; protein ubiquitination. Its function is as follows. Substrate-recognition component of the SCF(FBXO46) protein ligase complex, which mediates the ubiquitination and degradation of target proteins. In absence of stress, the SCF(FBXO46) complex catalyzes ubiquitination and degradation of MTOR-phosphorylated FBXO31. The polypeptide is F-box only protein 46 (Homo sapiens (Human)).